The primary structure comprises 187 residues: Mast cell-expressed membrane protein 1 (187 aa).

Topologically, residues 1-85 (MEVEEIYKHQ…PCWLYRAILS (85 aa)) are cytoplasmic. The tract at residues 49-71 (DHAKGGHSRPTSQVPAQCRPPSD) is disordered. A helical; Signal-anchor for type II membrane protein transmembrane segment spans residues 86–106 (LYILLALAFVLCIILSAFIMV). The Extracellular segment spans residues 107–187 (KNAEMSKELL…LQKMPQSSPQ (81 aa)). A glycan (N-linked (GlcNAc...) asparagine) is linked at Asn-124.

As to expression, expressed specifically in mast cells. Found primarily in lung.

It localises to the membrane. The protein is Mast cell-expressed membrane protein 1 of Homo sapiens (Human).